The sequence spans 296 residues: Bifunctional protein FolD (296 aa).

NADP(+)-binding positions include 166–168 (GRS), S195, and T236.

The protein belongs to the tetrahydrofolate dehydrogenase/cyclohydrolase family. In terms of assembly, homodimer.

It catalyses the reaction (6R)-5,10-methylene-5,6,7,8-tetrahydrofolate + NADP(+) = (6R)-5,10-methenyltetrahydrofolate + NADPH. The enzyme catalyses (6R)-5,10-methenyltetrahydrofolate + H2O = (6R)-10-formyltetrahydrofolate + H(+). It participates in one-carbon metabolism; tetrahydrofolate interconversion. In terms of biological role, catalyzes the oxidation of 5,10-methylenetetrahydrofolate to 5,10-methenyltetrahydrofolate and then the hydrolysis of 5,10-methenyltetrahydrofolate to 10-formyltetrahydrofolate. This chain is Bifunctional protein FolD, found in Dehalococcoides mccartyi (strain ATCC BAA-2100 / JCM 16839 / KCTC 5957 / BAV1).